A 606-amino-acid polypeptide reads, in one-letter code: Putative amino acid transporter AAT1 (606 aa).

The tract at residues 1 to 156 is disordered; sequence MNKKYGTSSN…DEEGTNKPKR (156 aa). Basic and acidic residues-rich tracts occupy residues 12–25 and 72–89; these read HDNK…ADKN and SDKK…ESSK. The span at 140-149 shows a compositional bias: acidic residues; that stretch reads SDGDYTNDEE. 11 helical membrane passes run 175–194, 200–225, 246–271, 283–301, 313–332, 352–372, 393–412, 428–449, 522–539, 545–567, and 579–605; these read TVLF…PYVF, ILSI…TSSL, TIID…SNFL, LFTN…ILPI, FLIF…GLQT, HFFK…NACF, VILQ…FSFL, VSIL…PLNF, MWIS…ACKV, VIGI…LIYY, and RYST…LNLI.

It belongs to the amino acid/polyamine transporter 2 family.

It localises to the vacuole membrane. Its function is as follows. Putative amino acid transporter. Probably transports tryptophan. Involved in maintaining the osmotic homeostasis of the digestive vacuole. Important for the timely development and growth of the asexual-stage parasites and male gametocyte maturation. The sequence is that of Putative amino acid transporter AAT1 from Plasmodium falciparum (isolate 3D7).